The chain runs to 133 residues: MSAEKISISLPKELYRELEDFIIRKGIPDRSKIFQIALRNYLDENRDGNEIIYGIINLVYDHEEASEALTEIQHEYNDSIISTLHLHVSEKICIEAIAVKGEKRKLVELNNKLGQIRGILKARLLISFPYEKT.

Ni(2+)-binding residues include His74, His85, His87, and Cys93.

The protein belongs to the transcriptional regulatory CopG/NikR family. Requires Ni(2+) as cofactor.

Functionally, transcriptional regulator. The chain is Putative nickel-responsive regulator from Saccharolobus solfataricus (strain ATCC 35092 / DSM 1617 / JCM 11322 / P2) (Sulfolobus solfataricus).